Here is a 1050-residue protein sequence, read N- to C-terminus: MEVAVEKAVAAAAAASAAASGGPSAAPSGENEAESRQGPDSERGGEAARLNLLDTCAVCHQNIQSRAPKLLPCLHSFCQRCLPAPQRYLMLPAPMLGSAETPPPVPAPGSPVSGSSPFATQVGVIRCPVCSQECAERHIIDNFFVKDTTEVPSSTVEKSNQVCTSCEDNAEANGFCVECVEWLCKTCIRAHQRVKFTKDHTVRQKEEVSPEAVGVTSQRPVFCPFHKKEQLKLYCETCDKLTCRDCQLLEHKEHRYQFIEEAFQNQKVIIDTLITKLMEKTKYIKFTGNQIQNRIIEVNQNQKQVEQDIKVAIFTLMVEINKKGKALLHQLESLAKDHRMKLMQQQQEVAGLSKQLEHVMHFSKWAVSSGSSTALLYSKRLITYRLRHLLRARCDASPVTNNTIQFHCDPSFWAQNIINLGSLVIEDKESQPQMPKQNPVVEQNSQPPSGLSSNQLSKFPTQISLAQLRLQHMQQQVMAQRQQVQRRPAPVGLPNPRMQGPIQQPSISHQQPPPRLINFQNHSPKPNGPVLPPHPQQLRYPPNQNIPRQAIKPNPLQMAFLAQQAIKQWQISSGQGTPSTTNSTSSTPSSPTITSAAGYDGKAFGSPMIDLSSPVGGSYNLPSLPDIDCSSTIMLDNIVRKDTNIDHGQPRPPSNRTVQSPNSSVPSPGLAGPVTMTSVHPPIRSPSASSVGSRGSSGSSSKPAGADSTHKVPVVMLEPIRIKQENSGPPENYDFPVVIVKQESDEESRPQNANYPRSILTSLLLNSSQSSTSEETVLRSDAPDSTGDQPGLHQDNSSNGKSEWLDPSQKSPLHVGETRKEDDPNEDWCAVCQNGGELLCCEKCPKVFHLSCHVPTLTNFPSGEWICTFCRDLSKPEVEYDCDAPSHNSEKKKTEGLVKLTPIDKRKCERLLLFLYCHEMSLAFQDPVPLTVPDYYKIIKNPMDLSTIKKRLQEDYSMYSKPEDFVADFRLIFQNCAEFNEPDSEVANAGIKLENYFEELLKNLYPEKRFPKPEFRNESEDNKFSDDSDDDFVQPRKKRLKSIEERQLLK.

Lys7 participates in a covalent cross-link: Glycyl lysine isopeptide (Lys-Gly) (interchain with G-Cter in SUMO2). The segment covering Ala15–Glu30 has biased composition (low complexity). The tract at residues Ala15–Gly44 is disordered. Residues Ala33–Gly44 show a composition bias toward basic and acidic residues. Residues Cys56–Leu82 form an RING-type zinc finger. A Phosphothreonine modification is found at Thr101. A Phosphoserine modification is found at Ser110. 2 consecutive B box-type zinc fingers follow at residues Lys158–Glu211 and Gln218–Ile259. Residues Cys163, Cys166, Cys187, and His200 each coordinate Zn(2+). Lys205 is covalently cross-linked (Glycyl lysine isopeptide (Lys-Gly) (interchain with G-Cter in SUMO2)). The Zn(2+) site is built by Cys223, His226, Cys246, and His251. A Glycyl lysine isopeptide (Lys-Gly) (interchain with G-Cter in SUMO2) cross-link involves residue Lys276. Residues Asn289 to Val359 adopt a coiled-coil conformation. Residues Glu429 to Leu456 are disordered. Positions Gln431–Leu456 are enriched in polar residues. Glycyl lysine isopeptide (Lys-Gly) (interchain with G-Cter in SUMO2) cross-links involve residues Lys436 and Lys458. Residue Arg469 is modified to Omega-N-methylarginine. Low complexity-rich tracts occupy residues Gln476–Pro490 and Gln499–Gln510. A disordered region spans residues Gln476 to Ala550. Residues Pro526 to Pro535 are compositionally biased toward pro residues. Residue Lys552 forms a Glycyl lysine isopeptide (Lys-Gly) (interchain with G-Cter in SUMO2) linkage. A disordered region spans residues Ile571–Thr594. A compositionally biased stretch (low complexity) spans Thr577–Thr594. Lys641 is covalently cross-linked (Glycyl lysine isopeptide (Lys-Gly) (interchain with G-Cter in SUMO2)). Positions Thr643 to Val712 are disordered. 3 positions are modified to phosphoserine: Ser654, Ser660, and Ser667. Polar residues predominate over residues Ser654 to Pro666. Residues Ser685–Asp707 are compositionally biased toward low complexity. Residues Lys702 and Lys711 each participate in a glycyl lysine isopeptide (Lys-Gly) (interchain with G-Cter in SUMO2) cross-link. Lys723 participates in a covalent cross-link: Glycyl lysine isopeptide (Lys-Gly) (interchain with G-Cter in SUMO1); alternate. Residue Lys723 forms a Glycyl lysine isopeptide (Lys-Gly) (interchain with G-Cter in SUMO2); alternate linkage. Residue Lys741 forms a Glycyl lysine isopeptide (Lys-Gly) (interchain with G-Cter in SUMO2) linkage. The residue at position 744 (Ser744) is a Phosphoserine. The nuclear receptor binding site (NRBS) stretch occupies residues Asn754–Arg779. The segment at Asn766–Pro824 is disordered. Ser768 carries the post-translational modification Phosphoserine; by ATM. Lys801 participates in a covalent cross-link: Glycyl lysine isopeptide (Lys-Gly) (interchain with G-Cter in SUMO2). A Phosphoserine modification is found at Ser808. A Glycyl lysine isopeptide (Lys-Gly) (interchain with G-Cter in SUMO2) cross-link involves residue Lys810. Ser811 carries the post-translational modification Phosphoserine. Thr818 carries the post-translational modification Phosphothreonine. Residues Glu826–Leu873 form a PHD-type zinc finger. The tract at residues Asn834–Cys840 is interaction with histone H3 that is not methylated at 'Lys-4' (H3K4me0). Lys875 is covalently cross-linked (Glycyl lysine isopeptide (Lys-Gly) (interchain with G-Cter in SUMO2)). A Nuclear localization signal motif is present at residues Lys891–Lys907. Residues Lys899–Leu1004 enclose the Bromo domain. A Glycyl lysine isopeptide (Lys-Gly) (interchain with G-Cter in SUMO2) cross-link involves residue Lys949. The interval Phe979–Asn980 is interaction with histone H3 that is acetylated at 'Lys-23' (H3K23ac). A Glycyl lysine isopeptide (Lys-Gly) (interchain with G-Cter in SUMO2) cross-link involves residue Lys992. Positions Pro1011–Asp1026 are enriched in basic and acidic residues. Residues Pro1011–Arg1036 form a disordered region. Residues Ser1019, Ser1025, and Ser1028 each carry the phosphoserine modification. Lys1041 participates in a covalent cross-link: Glycyl lysine isopeptide (Lys-Gly) (interchain with G-Cter in SUMO2). Ser1042 is modified (phosphoserine).

As to quaternary structure, interacts with CARM1, NCOA2/GRIP1, PML, KAT5/TIP60, BRD7, CBX1, CBX3 and CBX5. Part of a coactivator complex containing TRIM24, NCOA2 and CARM1. Interacts with NR3C2/MCR. Interacts with the ligand-binding domain of estrogen receptors (in vitro). Interaction with DNA-bound estrogen receptors requires the presence of estradiol. Interacts with AR and p53/TP53. Interacts (via bromo domain) with histone H3 (via N-terminus), provided that it is not methylated at 'Lys-4' (H3K4me0). Does not interact with histone H3 that is methylated at 'Lys-4' (H3K4me1, H3K4me2 or H3K4me3). Interacts (via bromo domain) with histone H3 (via N-terminus) that is acetylated at 'Lys-23' (H3K23ac). Has the highest affinity for histone H3 that is both unmodified at 'Lys-4' (H3K4me0) and acetylated at 'Lys-23' (H3K23ac). Has very low affinity for histone H3 that is methylated at 'Lys-9' (H3K9me), or acetylated at both 'Lys-9' (H3K9ac) and 'Lys-14' (H3K14ac), or acetylated at 'Lys-27' (H3K27ac) (in vitro). Interacts with TRIM16. In terms of processing, phosphorylated at Ser-768 by ATM kinase induces ubiquitination and degradation during DNA damage. Post-translationally, sumoylated. Undergoes ubiquitination-mediated degradation in response to DNA damage.

It is found in the nucleus. The protein localises to the cytoplasm. The protein resides in the mitochondrion. It carries out the reaction S-ubiquitinyl-[E2 ubiquitin-conjugating enzyme]-L-cysteine + [acceptor protein]-L-lysine = [E2 ubiquitin-conjugating enzyme]-L-cysteine + N(6)-ubiquitinyl-[acceptor protein]-L-lysine.. The protein operates within protein modification; protein ubiquitination. In terms of biological role, transcriptional coactivator that interacts with numerous nuclear receptors and coactivators and modulates the transcription of target genes. Interacts with chromatin depending on histone H3 modifications, having the highest affinity for histone H3 that is both unmodified at 'Lys-4' (H3K4me0) and acetylated at 'Lys-23' (H3K23ac). Has E3 protein-ubiquitin ligase activity. During the DNA damage response, participates in an autoregulatory feedback loop with TP53. Early in response to DNA damage, ATM kinase phosphorylates TRIM24 leading to its ubiquitination and degradation. After sufficient DNA repair has occurred, TP53 activates TRIM24 transcription, ultimately leading to TRIM24-mediated TP53 ubiquitination and degradation. Plays a role in the regulation of cell proliferation and apoptosis, at least in part via its effects on p53/TP53 levels. Up-regulates ligand-dependent transcription activation by AR, GCR/NR3C1, thyroid hormone receptor (TR) and ESR1. Modulates transcription activation by retinoic acid (RA) receptors, including RARA. Plays a role in regulating retinoic acid-dependent proliferation of hepatocytes. Also participates in innate immunity by mediating the specific 'Lys-63'-linked ubiquitination of TRAF3 leading to activation of downstream signal transduction of the type I IFN pathway. Additionally, negatively regulates NLRP3/CASP1/IL-1beta-mediated pyroptosis and cell migration probably by ubiquitinating NLRP3. This chain is Transcription intermediary factor 1-alpha (TRIM24), found in Homo sapiens (Human).